A 326-amino-acid chain; its full sequence is Phenylserine dehydratase (326 aa).

In terms of assembly, monomer. The cofactor is pyridoxal 5'-phosphate.

The enzyme catalyses L-threo-3-phenylserine = 3-phenylpyruvate + NH4(+). With respect to regulation, inhibited by phenylhydrazine, hydroxylamine, p-chloromercuribenzoate, and HgCl(2). This Ralstonia pickettii (Burkholderia pickettii) protein is Phenylserine dehydratase.